A 245-amino-acid chain; its full sequence is MALRVQFENNDDIGVFTKLTNTYCLVAIGGSETFYSAFEAELGDTIPVVHANVGGCRIIGRLTVGNRNGLLVPNSTTDEELQHLRNSLPDAVKIYRVEERLSALGNVIACNDYVALVHPDLDKETEEIIADVLKVEVFRQTIADNSLVGSYAVLSNQGGMVHPKTSIQDQDELSSLLQVPLVAGTVNRGSEVLAAGMVVNDWLSFVGMNTTATEISVIESVFKLNQAQPATVTTKLRAALIEDMS.

Belongs to the eIF-6 family. In terms of assembly, monomer. Associates with the 60S ribosomal subunit.

The protein localises to the cytoplasm. It is found in the nucleus. The protein resides in the nucleolus. Functionally, binds to the 60S ribosomal subunit and prevents its association with the 40S ribosomal subunit to form the 80S initiation complex in the cytoplasm. May also be involved in ribosome biogenesis. The protein is Eukaryotic translation initiation factor 6 of Drosophila melanogaster (Fruit fly).